The primary structure comprises 248 residues: Gamma-glutamyl peptidase 2 (248 aa).

Positions 17-212 (SEFVKEMYGG…IDRVHKIKFV (196 aa)) constitute a Glutamine amidotransferase type-1 domain. Residue Cys-101 is the Nucleophile of the active site. Catalysis depends on residues His-191 and Glu-193.

Belongs to the peptidase C26 family.

The protein resides in the cytoplasm. Its subcellular location is the cytosol. It carries out the reaction an S-[(1E)-1-(hydroxyimino)-omega-(methylsulfanyl)alkyl]-L-glutathione + H2O = an S-[(1E)-1-(hydroxyimino)-omega-(methylsulfanyl)alkyl]-L-cysteinylglycine + L-glutamate. The enzyme catalyses (E)-1-(glutathione-S-yl)-2-(1H-indol-3-yl)acetohydroximate + H2O = (E)-1-(glycyl-L-cystein-S-yl)-2-(1H-indol-3-yl)acetohydroximate + L-glutamate. The catalysed reaction is 2-(glutathion-S-yl)-2-(1H-indol-3-yl)acetonitrile + H2O = 2-(glycyl-L-cystein-S-yl)-2-(1H-indol-3-yl)acetonitrile + L-glutamate. It catalyses the reaction (Z)-1-(glutathione-S-yl)-2-phenylacetohydroximate + H2O = (Z)-1-(glycyl-L-cystein-S-yl)-2-phenylacetohydroximate + L-glutamate. It functions in the pathway secondary metabolite biosynthesis. In terms of biological role, involved in glucosinolate biosynthesis. Hydrolyzes the gamma-glutamyl peptide bond of several glutathione (GSH) conjugates to produce Cys-Gly conjugates related to glucosinolates. The gamma-Glu-Cys-Gly-GSH conjugates are the sulfur-donating molecule in glucosinolate biosynthesis. The chain is Gamma-glutamyl peptidase 2 from Arabidopsis thaliana (Mouse-ear cress).